Here is a 116-residue protein sequence, read N- to C-terminus: Class I hydrophobin 1 (116 aa).

The first 19 residues, 1-19 (MLFKQAILVATTLTDLAVA), serve as a signal peptide directing secretion. 4 cysteine pairs are disulfide-bonded: Cys-35–Cys-95, Cys-42–Cys-89, Cys-43–Cys-76, and Cys-96–Cys-109. Residues Asn-44 and Asn-100 are each glycosylated (N-linked (GlcNAc...) asparagine).

Belongs to the fungal hydrophobin family. As to quaternary structure, self-assembles to form functional amyloid fibrils called rodlets. Self-assembly into fibrillar rodlets occurs spontaneously at hydrophobic:hydrophilic interfaces and the rodlets further associate laterally to form amphipathic monolayers.

The protein localises to the secreted. The protein resides in the cell wall. Its function is as follows. Aerial growth, conidiation, and dispersal of filamentous fungi in the environment rely upon a capability of their secreting small amphipathic proteins called hydrophobins (HPBs) with low sequence identity. Class I can self-assemble into an outermost layer of rodlet bundles on aerial cell surfaces, conferring cellular hydrophobicity that supports fungal growth, development and dispersal; whereas Class II form highly ordered films at water-air interfaces through intermolecular interactions but contribute nothing to the rodlet structure. In Pleurotus ostreatus (Oyster mushroom), this protein is Class I hydrophobin 1.